We begin with the raw amino-acid sequence, 150 residues long: Probable NADH dehydrogenase [ubiquinone] 1 alpha subcomplex subunit 5 (150 aa).

This sequence belongs to the complex I NDUFA5 subunit family. As to quaternary structure, complex I is composed of 45 different subunits.

It localises to the mitochondrion inner membrane. Functionally, accessory subunit of the mitochondrial membrane respiratory chain NADH dehydrogenase (Complex I), that is believed not to be involved in catalysis. Complex I functions in the transfer of electrons from NADH to the respiratory chain. The immediate electron acceptor for the enzyme is believed to be ubiquinone. This Caenorhabditis elegans protein is Probable NADH dehydrogenase [ubiquinone] 1 alpha subcomplex subunit 5.